Here is a 459-residue protein sequence, read N- to C-terminus: Bifunctional protein GlmU (459 aa).

A pyrophosphorylase region spans residues 1-230; that stretch reads MTTRNTIILA…FDESMGVNDR (230 aa). Residues 9 to 12, Lys-23, Gln-73, 78 to 79, 101 to 103, Gly-140, Glu-155, Asn-170, and Asn-228 each bind UDP-N-acetyl-alpha-D-glucosamine; these read LAAG, GT, and SGD. Asp-103 serves as a coordination point for Mg(2+). Residue Asn-228 coordinates Mg(2+). The linker stretch occupies residues 231-251; sequence VALSAATKIMRDRINEAHMRD. The N-acetyltransferase stretch occupies residues 252–459; that stretch reads GVTLIDPATT…YQKLPYRGED (208 aa). Arg-333 and Lys-351 together coordinate UDP-N-acetyl-alpha-D-glucosamine. His-363 serves as the catalytic Proton acceptor. The UDP-N-acetyl-alpha-D-glucosamine site is built by Tyr-366 and Asn-377. Acetyl-CoA-binding positions include 386-387, Ser-405, Ala-423, and Arg-440; that span reads NY.

This sequence in the N-terminal section; belongs to the N-acetylglucosamine-1-phosphate uridyltransferase family. It in the C-terminal section; belongs to the transferase hexapeptide repeat family. Homotrimer. Mg(2+) is required as a cofactor.

The protein resides in the cytoplasm. The catalysed reaction is alpha-D-glucosamine 1-phosphate + acetyl-CoA = N-acetyl-alpha-D-glucosamine 1-phosphate + CoA + H(+). It carries out the reaction N-acetyl-alpha-D-glucosamine 1-phosphate + UTP + H(+) = UDP-N-acetyl-alpha-D-glucosamine + diphosphate. It participates in nucleotide-sugar biosynthesis; UDP-N-acetyl-alpha-D-glucosamine biosynthesis; N-acetyl-alpha-D-glucosamine 1-phosphate from alpha-D-glucosamine 6-phosphate (route II): step 2/2. The protein operates within nucleotide-sugar biosynthesis; UDP-N-acetyl-alpha-D-glucosamine biosynthesis; UDP-N-acetyl-alpha-D-glucosamine from N-acetyl-alpha-D-glucosamine 1-phosphate: step 1/1. It functions in the pathway bacterial outer membrane biogenesis; LPS lipid A biosynthesis. Functionally, catalyzes the last two sequential reactions in the de novo biosynthetic pathway for UDP-N-acetylglucosamine (UDP-GlcNAc). The C-terminal domain catalyzes the transfer of acetyl group from acetyl coenzyme A to glucosamine-1-phosphate (GlcN-1-P) to produce N-acetylglucosamine-1-phosphate (GlcNAc-1-P), which is converted into UDP-GlcNAc by the transfer of uridine 5-monophosphate (from uridine 5-triphosphate), a reaction catalyzed by the N-terminal domain. This is Bifunctional protein GlmU from Levilactobacillus brevis (strain ATCC 367 / BCRC 12310 / CIP 105137 / JCM 1170 / LMG 11437 / NCIMB 947 / NCTC 947) (Lactobacillus brevis).